Here is a 361-residue protein sequence, read N- to C-terminus: Queuine tRNA-ribosyltransferase (361 aa).

Asp89 functions as the Proton acceptor in the catalytic mechanism. Residues 89–93, Asp143, Gln185, and Gly212 each bind substrate; that span reads DSGGF. Positions 243 to 249 are RNA binding; it reads GVGTPED. Catalysis depends on Asp262, which acts as the Nucleophile. An RNA binding; important for wobble base 34 recognition region spans residues 267-271; sequence TRNAR. Zn(2+) contacts are provided by Cys300, Cys302, Cys305, and His331.

Belongs to the queuine tRNA-ribosyltransferase family. Homodimer. Within each dimer, one monomer is responsible for RNA recognition and catalysis, while the other monomer binds to the replacement base PreQ1. Zn(2+) serves as cofactor.

It carries out the reaction 7-aminomethyl-7-carbaguanine + guanosine(34) in tRNA = 7-aminomethyl-7-carbaguanosine(34) in tRNA + guanine. The protein operates within tRNA modification; tRNA-queuosine biosynthesis. Functionally, catalyzes the base-exchange of a guanine (G) residue with the queuine precursor 7-aminomethyl-7-deazaguanine (PreQ1) at position 34 (anticodon wobble position) in tRNAs with GU(N) anticodons (tRNA-Asp, -Asn, -His and -Tyr). Catalysis occurs through a double-displacement mechanism. The nucleophile active site attacks the C1' of nucleotide 34 to detach the guanine base from the RNA, forming a covalent enzyme-RNA intermediate. The proton acceptor active site deprotonates the incoming PreQ1, allowing a nucleophilic attack on the C1' of the ribose to form the product. After dissociation, two additional enzymatic reactions on the tRNA convert PreQ1 to queuine (Q), resulting in the hypermodified nucleoside queuosine (7-(((4,5-cis-dihydroxy-2-cyclopenten-1-yl)amino)methyl)-7-deazaguanosine). The polypeptide is Queuine tRNA-ribosyltransferase (Nitrosomonas eutropha (strain DSM 101675 / C91 / Nm57)).